The chain runs to 88 residues: Small cysteine-rich outer membrane protein OmcA (88 aa).

An N-terminal signal peptide occupies residues 1–18 (MKKTALLAALCSVVSLSS). A lipid anchor (N-palmitoyl cysteine) is attached at C19. A lipid anchor (S-diacylglycerol cysteine) is attached at C19. The segment at 67 to 88 (THQDAEHGPQAREIPVDGKCRQ) is disordered.

In terms of assembly, part of a disulfide cross-linked outer membrane complex (COMC) composed of the major outer membrane porin (MOMP), the small cysteine-rich protein (OmcA) and the large cysteine-rich periplasmic protein (OmcB).

It is found in the cell outer membrane. In elementary bodies (EBs, the infectious stage, which is able to survive outside the host cell) provides the structural integrity of the outer envelope through disulfide cross-links with the large cysteine-rich periplasmic protein and the major outer membrane porin. It has been described in publications as the Sarkosyl-insoluble COMC (Chlamydia outer membrane complex), and serves as the functional equivalent of peptidoglycan. The chain is Small cysteine-rich outer membrane protein OmcA (omcA) from Chlamydia trachomatis serovar L2 (strain ATCC VR-902B / DSM 19102 / 434/Bu).